The chain runs to 255 residues: MNMNQTTSPALSQVETAIRVPAGIFAKYNYYSVFDIVRQTRKQFINANMSWPGSRGGKTWDLAMGQAQYIRCMFRENQLTRRVRGTLQQTPDNGTNLSSSAVGGIQGQAERRPDLATLMVVNDAINQQIPTLLPTHFPHDQVELSLLNTDVSLEDIISESSIDWPWFLSNSLTGDNSNYAMELASRLSPEQQTLPTEPDNSTATDLTSFYQTNLGLKTADYTPFEALNTFARQLAITVPPGGTVDCGYSACQPAV.

The protein belongs to the SpvA family.

Functionally, not known. This protein is involved in the virulence of salmonellas. The sequence is that of 28.1 kDa virulence protein (mkaB) from Salmonella typhimurium.